The primary structure comprises 1022 residues: Protein translocase subunit SecA (1022 aa).

ATP-binding positions include Q143, 161-165 (GEGKT), and D661. The tract at residues 973-1001 (AGSILSHESDVPSGTAAQQPIKADVKPGR) is disordered. The Zn(2+) site is built by C1005, C1007, C1016, and H1017.

This sequence belongs to the SecA family. Monomer and homodimer. Part of the essential Sec protein translocation apparatus which comprises SecA, SecYEG and auxiliary proteins SecDF. Other proteins may also be involved. Zn(2+) is required as a cofactor.

Its subcellular location is the cell inner membrane. It is found in the cytoplasm. The catalysed reaction is ATP + H2O + cellular proteinSide 1 = ADP + phosphate + cellular proteinSide 2.. In terms of biological role, part of the Sec protein translocase complex. Interacts with the SecYEG preprotein conducting channel. Has a central role in coupling the hydrolysis of ATP to the transfer of proteins into and across the cell membrane, serving as an ATP-driven molecular motor driving the stepwise translocation of polypeptide chains across the membrane. The protein is Protein translocase subunit SecA of Chlorobium phaeobacteroides (strain DSM 266 / SMG 266 / 2430).